We begin with the raw amino-acid sequence, 545 residues long: CTP synthase (545 aa).

Residues 1–266 (MTTNYIFVTG…DDLVCARFGI (266 aa)) are amidoligase domain. Ser14 serves as a coordination point for CTP. Ser14 contacts UTP. Residues 15–20 (SLGKGI) and Asp72 contribute to the ATP site. Asp72 and Glu140 together coordinate Mg(2+). CTP-binding positions include 147-149 (DIE), 187-192 (KTKPTQ), and Lys223. UTP-binding positions include 187–192 (KTKPTQ) and Lys223. 239 to 241 (KDV) is an ATP binding site. The 252-residue stretch at 291–542 (TIGMVGKYTE…VKAAGQFQRG (252 aa)) folds into the Glutamine amidotransferase type-1 domain. Position 352 (Gly352) interacts with L-glutamine. Cys379 acts as the Nucleophile; for glutamine hydrolysis in catalysis. L-glutamine-binding positions include 380 to 383 (LGMQ), Glu403, and Arg470. Catalysis depends on residues His515 and Glu517.

The protein belongs to the CTP synthase family. In terms of assembly, homotetramer.

The catalysed reaction is UTP + L-glutamine + ATP + H2O = CTP + L-glutamate + ADP + phosphate + 2 H(+). It catalyses the reaction L-glutamine + H2O = L-glutamate + NH4(+). The enzyme catalyses UTP + NH4(+) + ATP = CTP + ADP + phosphate + 2 H(+). It participates in pyrimidine metabolism; CTP biosynthesis via de novo pathway; CTP from UDP: step 2/2. With respect to regulation, allosterically activated by GTP, when glutamine is the substrate; GTP has no effect on the reaction when ammonia is the substrate. The allosteric effector GTP functions by stabilizing the protein conformation that binds the tetrahedral intermediate(s) formed during glutamine hydrolysis. Inhibited by the product CTP, via allosteric rather than competitive inhibition. In terms of biological role, catalyzes the ATP-dependent amination of UTP to CTP with either L-glutamine or ammonia as the source of nitrogen. Regulates intracellular CTP levels through interactions with the four ribonucleotide triphosphates. The polypeptide is CTP synthase (Vibrio cholerae serotype O1 (strain ATCC 39541 / Classical Ogawa 395 / O395)).